Consider the following 239-residue polypeptide: Proteasome activator complex subunit 2 (239 aa).

Residue Ala-2 is modified to N-acetylalanine. Residue Ser-10 is modified to Phosphoserine. A disordered region spans residues 65 to 86; the sequence is DIPIPDPPPKDDEMETDKQEKK. Positions 72 to 86 are enriched in basic and acidic residues; that stretch reads PPKDDEMETDKQEKK.

It belongs to the PA28 family. Heterodimer of PSME1 and PSME2, which forms a hexameric ring.

In terms of biological role, implicated in immunoproteasome assembly and required for efficient antigen processing. The PA28 activator complex enhances the generation of class I binding peptides by altering the cleavage pattern of the proteasome. The protein is Proteasome activator complex subunit 2 (PSME2) of Sus scrofa (Pig).